The sequence spans 149 residues: 3-dehydroquinate dehydratase (149 aa).

The active-site Proton acceptor is tyrosine 26. Residues asparagine 77, histidine 83, and aspartate 90 each contribute to the substrate site. Histidine 103 (proton donor) is an active-site residue. Residues 104 to 105 (LS) and arginine 114 contribute to the substrate site.

Belongs to the type-II 3-dehydroquinase family. In terms of assembly, homododecamer.

The enzyme catalyses 3-dehydroquinate = 3-dehydroshikimate + H2O. Its pathway is metabolic intermediate biosynthesis; chorismate biosynthesis; chorismate from D-erythrose 4-phosphate and phosphoenolpyruvate: step 3/7. Functionally, catalyzes a trans-dehydration via an enolate intermediate. In Aeromonas hydrophila subsp. hydrophila (strain ATCC 7966 / DSM 30187 / BCRC 13018 / CCUG 14551 / JCM 1027 / KCTC 2358 / NCIMB 9240 / NCTC 8049), this protein is 3-dehydroquinate dehydratase.